The primary structure comprises 278 residues: Sulfide dehydrogenase subunit beta (278 aa).

Residues 1–4 (MFKI) constitute a propeptide that is removed on maturation. An FAD-binding FR-type domain is found at 1 to 95 (MFKILRKERL…LGPLGKPSHI (95 aa)). Positions 222, 225, and 237 each coordinate [2Fe-2S] cluster.

As to quaternary structure, heterodimer of alpha and beta subunits. The cofactor is FAD. It depends on [2Fe-2S] cluster as a cofactor.

The protein localises to the cytoplasm. It carries out the reaction n sulfur + hydrogen sulfide + NADP(+) = (n+1) sulfur + NADPH. The catalysed reaction is 2 reduced [2Fe-2S]-[ferredoxin] + NADP(+) + H(+) = 2 oxidized [2Fe-2S]-[ferredoxin] + NADPH. In terms of biological role, a bifunctional enzyme that catalyzes the reduction of elemental sulfur or polysulfide to hydrogen sulfide with NADPH as electron donor. Also functions as a reduced ferredoxin:NADP oxidoreductase with a very high affinity for reduced ferredoxin. Exhibits a broad specificity for various physiological and non-physiological substrates with varied reduction potentials such as methyl viologen, benzyl viologen, FAD, FMN, methylene blue, 2,6-dichlorophenolindophenol (DCIP), cytochrome C and ferricyanide with highest preference for benzyl viologen. Does not reduce fumarate, succinate, nitrate, nitrite, sulfate, sulfite or protons. Does not possess any hydrogenase activity or NADPH-dependent glutamate synthase activity. The polypeptide is Sulfide dehydrogenase subunit beta (Pyrococcus furiosus (strain ATCC 43587 / DSM 3638 / JCM 8422 / Vc1)).